Here is a 367-residue protein sequence, read N- to C-terminus: Anhydro-N-acetylmuramic acid kinase (367 aa).

Gly10–Asp17 provides a ligand contact to ATP.

This sequence belongs to the anhydro-N-acetylmuramic acid kinase family.

The enzyme catalyses 1,6-anhydro-N-acetyl-beta-muramate + ATP + H2O = N-acetyl-D-muramate 6-phosphate + ADP + H(+). It functions in the pathway amino-sugar metabolism; 1,6-anhydro-N-acetylmuramate degradation. The protein operates within cell wall biogenesis; peptidoglycan recycling. In terms of biological role, catalyzes the specific phosphorylation of 1,6-anhydro-N-acetylmuramic acid (anhMurNAc) with the simultaneous cleavage of the 1,6-anhydro ring, generating MurNAc-6-P. Is required for the utilization of anhMurNAc either imported from the medium or derived from its own cell wall murein, and thus plays a role in cell wall recycling. This chain is Anhydro-N-acetylmuramic acid kinase, found in Aliivibrio fischeri (strain ATCC 700601 / ES114) (Vibrio fischeri).